The following is a 142-amino-acid chain: HTH-type transcriptional regulator MntR (142 aa).

The HTH dtxR-type domain maps to 1–63; that stretch reads MPTPSMEDYI…YEKYRGLVLT (63 aa). Asp8, Glu11, His77, Glu99, Glu102, and His103 together coordinate Mn(2+).

This sequence belongs to the DtxR/MntR family. As to quaternary structure, homodimer.

The protein resides in the cytoplasm. DNA binding is strongly activated by Mn(2+). Central regulator of manganese homeostasis. This Bacillus cereus (strain G9842) protein is HTH-type transcriptional regulator MntR.